The following is a 252-amino-acid chain: Large ribosomal subunit protein uL4 (252 aa).

The protein belongs to the universal ribosomal protein uL4 family. As to quaternary structure, part of the 50S ribosomal subunit.

In terms of biological role, one of the primary rRNA binding proteins, this protein initially binds near the 5'-end of the 23S rRNA. It is important during the early stages of 50S assembly. It makes multiple contacts with different domains of the 23S rRNA in the assembled 50S subunit and ribosome. Functionally, forms part of the polypeptide exit tunnel. The polypeptide is Large ribosomal subunit protein uL4 (Methanococcus maripaludis (strain C7 / ATCC BAA-1331)).